Here is a 130-residue protein sequence, read N- to C-terminus: Small ribosomal subunit protein uS11 (130 aa).

Belongs to the universal ribosomal protein uS11 family. Part of the 30S ribosomal subunit. Interacts with proteins S7 and S18. Binds to IF-3.

Located on the platform of the 30S subunit, it bridges several disparate RNA helices of the 16S rRNA. Forms part of the Shine-Dalgarno cleft in the 70S ribosome. The sequence is that of Small ribosomal subunit protein uS11 from Gloeobacter violaceus (strain ATCC 29082 / PCC 7421).